Reading from the N-terminus, the 757-residue chain is Subtilisin-like protease SBT1.7 (757 aa).

The signal sequence occupies residues 1 to 24 (MSSSFLSSTAFFLLLCLGFCHVSS). Residues 25–106 (SSSDQGTYIV…VLPEHRYELH (82 aa)) constitute a propeptide that is removed on maturation. In terms of domain architecture, Inhibitor I9 spans 31-106 (TYIVHMAKSQ…VLPEHRYELH (76 aa)). Positions 102–610 (RYELHTTRTP…AGHVSPTTAT (509 aa)) constitute a Peptidase S8 domain. The active-site Charge relay system is D139. N-linked (GlcNAc...) asparagine glycosylation is present at N170. Positions 196–219 (PIDESKESRSPRDDDGHGTHTSST) are disordered. Residues 198 to 213 (DESKESRSPRDDDGHG) show a composition bias toward basic and acidic residues. H212 acts as the Charge relay system in catalysis. N352, N376, and N379 each carry an N-linked (GlcNAc...) asparagine glycan. S542 (charge relay system) is an active-site residue. N-linked (GlcNAc...) asparagine glycans are attached at residues N631 and N644.

This sequence belongs to the peptidase S8 family. Expressed in immature siliques and at lower levels in stems and flowers. Widely expressed at low levels.

The protein resides in the secreted. Its subcellular location is the cell wall. Its activity is regulated as follows. Activated by calcium. Inhibited by the serine protease inhibitors 4-(2-aminoethyl)benzenesulphonyl fluoride (AEBSF), PMSF, di-isopropyl phosphofluoridate (DFP) and soybean trypsin inhibitor (SBTI). Not inhibited by benzamidine or iodoacetamide. Leupeptin and pepstatin A have a minor inhibitory action. Serine protease. Has a substrate preference for the hydrophobic residues Phe and Ala and the basic residue Asp in the P1 position, and for Asp, Leu or Ala in the P1' position. Essential for mucilage release from seed coats. Triggers the accumulation and/or activation of cell wall modifying enzymes necessary either for the loosening of the outer primary cell wall, or to facilitate swelling of the mucilage. This Arabidopsis thaliana (Mouse-ear cress) protein is Subtilisin-like protease SBT1.7.